A 1019-amino-acid polypeptide reads, in one-letter code: StAR-related lipid transfer protein 8 (1019 aa).

Disordered stretches follow at residues 92–122 and 134–154; these read QPLL…KVKK and SLRR…CLAT. Positions 100 to 115 are enriched in polar residues; the sequence is SPSNQPFLSPPQGQEG. At Ser-108 the chain carries Phosphoserine. The span at 134-147 shows a compositional bias: basic and acidic residues; it reads SLRRKEKGDSRQTE. Arg-168 bears the Asymmetric dimethylarginine mark. A phosphoserine mark is found at Ser-234 and Ser-237. Disordered stretches follow at residues 325-355 and 406-482; these read MYPD…EVAT and APAQ…VGAS. The segment covering 334-347 has biased composition (acidic residues); that stretch reads KEEEEEEEEEEEEA. 2 stretches are compositionally biased toward polar residues: residues 418–430 and 437–455; these read NSTA…SSLS and ISDT…NSMN. Phosphoserine occurs at positions 494 and 502. One can recognise a Rho-GAP domain in the interval 569–773; the sequence is PPLIHVQRTG…HMISDCKKLF (205 aa). The disordered stretch occupies residues 731-754; it reads DSSSPRIKSKRSLVGRPGPRDLSE. Residues 805 to 1013 enclose the START domain; it reads AQAAGVSLSL…RDSFPTLQAA (209 aa).

In terms of assembly, binds both the SH2 and PTB domains of TNS1.

The protein resides in the cell junction. Its subcellular location is the focal adhesion. In terms of biological role, accelerates GTPase activity of RHOA and CDC42, but not RAC1. Stimulates the hydrolysis of phosphatidylinositol 4,5-bisphosphate by PLCD1. The sequence is that of StAR-related lipid transfer protein 8 (Stard8) from Mus musculus (Mouse).